Here is a 273-residue protein sequence, read N- to C-terminus: MSLSNAPLGQHVAYPSQYDPGLLFPIPRATNRASLQLGAALPFTGVDLWNAYELSWLDARGKPRVAMATFSFPADSPNIVESKSFKLYLNSFNQTRLPNAQALRDRLERDLAAAAGAPVGLEFISPQRFGELNMAELDGIYIDKLDIEIDTYEPAPQLLQCAPGDEVEETLATRLLKSNCPVTGQPDWASLQVRYRGRPIDRAALLKYVVSFRQHAEFHEHCVERIFGDIMRACQPRQLTVYARYTRRGGLDINPWRSNFESAPPADVRTARQ.

Substrate is bound at residue 80–82; that stretch reads VES. 82 to 83 contributes to the NADPH binding site; that stretch reads SK. Residue Cys-180 is the Thioimide intermediate of the active site. Residue Asp-187 is the Proton donor of the active site. 219–220 contacts substrate; it reads HE. 248 to 249 contributes to the NADPH binding site; the sequence is RG.

Belongs to the GTP cyclohydrolase I family. QueF type 2 subfamily. Homodimer.

The protein localises to the cytoplasm. The enzyme catalyses 7-aminomethyl-7-carbaguanine + 2 NADP(+) = 7-cyano-7-deazaguanine + 2 NADPH + 3 H(+). The protein operates within tRNA modification; tRNA-queuosine biosynthesis. Its function is as follows. Catalyzes the NADPH-dependent reduction of 7-cyano-7-deazaguanine (preQ0) to 7-aminomethyl-7-deazaguanine (preQ1). The polypeptide is NADPH-dependent 7-cyano-7-deazaguanine reductase (Bordetella pertussis (strain Tohama I / ATCC BAA-589 / NCTC 13251)).